Reading from the N-terminus, the 213-residue chain is 3-isopropylmalate dehydratase small subunit (213 aa).

The protein belongs to the LeuD family. LeuD type 1 subfamily. Heterodimer of LeuC and LeuD.

The enzyme catalyses (2R,3S)-3-isopropylmalate = (2S)-2-isopropylmalate. Its pathway is amino-acid biosynthesis; L-leucine biosynthesis; L-leucine from 3-methyl-2-oxobutanoate: step 2/4. Catalyzes the isomerization between 2-isopropylmalate and 3-isopropylmalate, via the formation of 2-isopropylmaleate. This is 3-isopropylmalate dehydratase small subunit from Neisseria meningitidis serogroup C (strain 053442).